We begin with the raw amino-acid sequence, 348 residues long: Large ribosomal subunit protein uL3m (348 aa).

The transit peptide at 1-40 (MPGWRLLTQVGAQVLGRLGDGLGAALGPGNRTHIWLFVRG) directs the protein to the mitochondrion.

The protein belongs to the universal ribosomal protein uL3 family. Component of the mitochondrial large ribosomal subunit (mt-LSU). Mature mammalian 55S mitochondrial ribosomes consist of a small (28S) and a large (39S) subunit. The 28S small subunit contains a 12S ribosomal RNA (12S mt-rRNA) and 30 different proteins. The 39S large subunit contains a 16S rRNA (16S mt-rRNA), a copy of mitochondrial valine transfer RNA (mt-tRNA(Val)), which plays an integral structural role, and 52 different proteins.

Its subcellular location is the mitochondrion. In Homo sapiens (Human), this protein is Large ribosomal subunit protein uL3m (MRPL3).